The chain runs to 467 residues: Fumarate hydratase class II (467 aa).

Substrate contacts are provided by residues S98–T100, R126, H129–D132, S139–N141, and T187. Catalysis depends on H188, which acts as the Proton donor/acceptor. S318 is an active-site residue. Residues S319 and K324–N326 contribute to the substrate site.

It belongs to the class-II fumarase/aspartase family. Fumarase subfamily. In terms of assembly, homotetramer.

It is found in the cytoplasm. The enzyme catalyses (S)-malate = fumarate + H2O. It functions in the pathway carbohydrate metabolism; tricarboxylic acid cycle; (S)-malate from fumarate: step 1/1. Inhibited by ATP, citrate and S-2,3-dicarboxyaziridine. In terms of biological role, involved in the TCA cycle. FumC seems to be a backup enzyme for FumA under conditions of iron limitation and oxidative stress. Catalyzes the stereospecific interconversion of fumarate to L-malate. This chain is Fumarate hydratase class II, found in Escherichia coli (strain K12).